The following is a 49-amino-acid chain: uncharacterized protein (49 aa).

Residues 1–22 (MIQKPILLSSFLFLYIRALLHS) form the signal peptide.

This is an uncharacterized protein from Saccharomyces cerevisiae (strain ATCC 204508 / S288c) (Baker's yeast).